The sequence spans 270 residues: Proteasome subunit alpha type-1 (270 aa).

The interval Ser-239 to Ile-270 is disordered. Residues Glu-245–Met-256 show a composition bias toward low complexity.

The protein belongs to the peptidase T1A family. In terms of assembly, the 26S proteasome consists of a 20S proteasome core and two 19S regulatory subunits. The 20S proteasome core is composed of 28 subunits that are arranged in four stacked rings, resulting in a barrel-shaped structure. The two end rings are each formed by seven alpha subunits, and the two central rings are each formed by seven beta subunits. The catalytic chamber with the active sites is on the inside of the barrel.

It is found in the cytoplasm. Its subcellular location is the nucleus. In terms of biological role, the proteasome is a multicatalytic proteinase complex which is characterized by its ability to cleave peptides with Arg, Phe, Tyr, Leu, and Glu adjacent to the leaving group at neutral or slightly basic pH. The proteasome has an ATP-dependent proteolytic activity. The protein is Proteasome subunit alpha type-1 (PAF1) of Oryza sativa subsp. japonica (Rice).